We begin with the raw amino-acid sequence, 936 residues long: Bifunctional uridylyltransferase/uridylyl-removing enzyme (936 aa).

The uridylyltransferase stretch occupies residues 1-372 (MTIPRIRQPR…SIATLLMRKR (372 aa)). The segment at 373-727 (NLGDFVLDGG…VLPDPERAVS (355 aa)) is uridylyl-removing. An HD domain is found at 488–610 (TDEHTIRAIG…VQSVERLHLL (123 aa)). ACT domains follow at residues 728-809 (EVLV…KALR) and 840-915 (VIEI…TVPR). Basic and acidic residues predominate over residues 915–930 (RKVEEGAEQGAEKADA). Residues 915 to 936 (RKVEEGAEQGAEKADAGEIVAA) form a disordered region.

Belongs to the GlnD family. It depends on Mg(2+) as a cofactor.

It catalyses the reaction [protein-PII]-L-tyrosine + UTP = [protein-PII]-uridylyl-L-tyrosine + diphosphate. The catalysed reaction is [protein-PII]-uridylyl-L-tyrosine + H2O = [protein-PII]-L-tyrosine + UMP + H(+). Its activity is regulated as follows. Uridylyltransferase (UTase) activity is inhibited by glutamine, while glutamine activates uridylyl-removing (UR) activity. Functionally, modifies, by uridylylation and deuridylylation, the PII regulatory proteins (GlnB and homologs), in response to the nitrogen status of the cell that GlnD senses through the glutamine level. Under low glutamine levels, catalyzes the conversion of the PII proteins and UTP to PII-UMP and PPi, while under higher glutamine levels, GlnD hydrolyzes PII-UMP to PII and UMP (deuridylylation). Thus, controls uridylylation state and activity of the PII proteins, and plays an important role in the regulation of nitrogen fixation and metabolism. The chain is Bifunctional uridylyltransferase/uridylyl-removing enzyme from Rhodospirillum rubrum (strain ATCC 11170 / ATH 1.1.1 / DSM 467 / LMG 4362 / NCIMB 8255 / S1).